Consider the following 132-residue polypeptide: Fumarate reductase subunit C (132 aa).

A run of 3 helical transmembrane segments spans residues 30 to 50 (ATSV…LCFA), 70 to 90 (IVVF…VTYF), and 110 to 130 (VVRN…LVLV).

It belongs to the FrdC family. Part of an enzyme complex containing four subunits: a flavoprotein (FrdA), an iron-sulfur protein (FrdB), and two hydrophobic anchor proteins (FrdC and FrdD).

The protein localises to the cell inner membrane. Functionally, anchors the catalytic components of the fumarate reductase complex to the cell membrane, binds quinones. This is Fumarate reductase subunit C from Haemophilus influenzae (strain ATCC 51907 / DSM 11121 / KW20 / Rd).